A 56-amino-acid polypeptide reads, in one-letter code: MGFATLWYSHPRKYGQGSRCCRACSNRHGLIRKYGLNICRQCFREYANDIGFKKLD.

The Zn(2+) site is built by cysteine 21, cysteine 24, cysteine 39, and cysteine 42.

Belongs to the universal ribosomal protein uS14 family. As to quaternary structure, component of the 40S small ribosomal subunit. Zn(2+) serves as cofactor.

It localises to the cytoplasm. The protein localises to the cytosol. It is found in the rough endoplasmic reticulum. The chain is Small ribosomal subunit protein uS14 (RpS29) from Drosophila melanogaster (Fruit fly).